We begin with the raw amino-acid sequence, 520 residues long: 2-isopropylmalate synthase (520 aa).

A Pyruvate carboxyltransferase domain is found at 4–266 (VEFLDTTLRD…TSDIVLNETV (263 aa)). Residues Asp-13, His-201, His-203, and Asn-237 each coordinate Mn(2+). The segment at 390–520 (HFGDLKLTSN…AVSFRDVPTN (131 aa)) is regulatory domain.

Belongs to the alpha-IPM synthase/homocitrate synthase family. LeuA type 1 subfamily. In terms of assembly, homodimer. Requires Mn(2+) as cofactor.

It is found in the cytoplasm. It carries out the reaction 3-methyl-2-oxobutanoate + acetyl-CoA + H2O = (2S)-2-isopropylmalate + CoA + H(+). Its pathway is amino-acid biosynthesis; L-leucine biosynthesis; L-leucine from 3-methyl-2-oxobutanoate: step 1/4. Its function is as follows. Catalyzes the condensation of the acetyl group of acetyl-CoA with 3-methyl-2-oxobutanoate (2-ketoisovalerate) to form 3-carboxy-3-hydroxy-4-methylpentanoate (2-isopropylmalate). The polypeptide is 2-isopropylmalate synthase (Streptococcus gallolyticus (strain UCN34)).